We begin with the raw amino-acid sequence, 159 residues long: Putative esterase DR_2406 (159 aa).

This sequence belongs to the thioesterase PaaI family.

This Deinococcus radiodurans (strain ATCC 13939 / DSM 20539 / JCM 16871 / CCUG 27074 / LMG 4051 / NBRC 15346 / NCIMB 9279 / VKM B-1422 / R1) protein is Putative esterase DR_2406.